The chain runs to 360 residues: Photosystem II protein D1 2 (360 aa).

The next 3 membrane-spanning stretches (helical) occupy residues 29–46 (YIGW…SATI), 118–133 (HFLI…EWEF), and 142–156 (WICV…AATA). His118 is a chlorophyll a binding site. Tyr126 provides a ligand contact to pheophytin a. Asp170 and Glu189 together coordinate [CaMn4O5] cluster. Residues 197–218 (LHMFGVAGVFGGSLFAAMHGSL) traverse the membrane as a helical segment. Residue His198 participates in chlorophyll a binding. A quinone-binding positions include His215 and 264 to 265 (SF). Residue His215 participates in Fe cation binding. His272 contributes to the Fe cation binding site. Residues 274-288 (FLAAWPVIGIWLTSL) traverse the membrane as a helical segment. [CaMn4O5] cluster-binding residues include His332, Glu333, Asp342, and Ala344. A propeptide spanning residues 345–360 (GTESAPVAFAAALGDG) is cleaved from the precursor.

It belongs to the reaction center PufL/M/PsbA/D family. As to quaternary structure, PSII is composed of 1 copy each of membrane proteins PsbA, PsbB, PsbC, PsbD, PsbE, PsbF, PsbH, PsbI, PsbJ, PsbK, PsbL, PsbM, PsbT, PsbX, Psb30/Ycf12, peripheral proteins PsbO, CyanoQ (PsbQ), PsbU, PsbV and a large number of cofactors. It forms dimeric complexes. The D1/D2 heterodimer binds P680, chlorophylls that are the primary electron donor of PSII, and subsequent electron acceptors. It shares a non-heme iron and each subunit binds pheophytin, quinone, additional chlorophylls, carotenoids and lipids. D1 provides most of the ligands for the Mn4-Ca-O5 cluster of the oxygen-evolving complex (OEC). There is also a Cl(-1) ion associated with D1 and D2, which is required for oxygen evolution. The PSII complex binds additional chlorophylls, carotenoids and specific lipids. serves as cofactor. Tyr-161 forms a radical intermediate that is referred to as redox-active TyrZ, YZ or Y-Z. In terms of processing, C-terminally processed by CtpA; processing is essential to allow assembly of the oxygen-evolving complex and thus photosynthetic growth.

Its subcellular location is the cell inner membrane. The catalysed reaction is 2 a plastoquinone + 4 hnu + 2 H2O = 2 a plastoquinol + O2. Its function is as follows. Photosystem II (PSII) is a light-driven water:plastoquinone oxidoreductase that uses light energy to abstract electrons from H(2)O, generating O(2) and a proton gradient subsequently used for ATP formation. It consists of a core antenna complex that captures photons, and an electron transfer chain that converts photonic excitation into a charge separation. The D1/D2 (PsbA/PsbD) reaction center heterodimer binds P680, the primary electron donor of PSII as well as several subsequent electron acceptors. This is Photosystem II protein D1 2 from Gloeobacter violaceus (strain ATCC 29082 / PCC 7421).